Reading from the N-terminus, the 267-residue chain is 2-keto-3-deoxy-L-rhamnonate aldolase (267 aa).

H49 functions as the Proton acceptor in the catalytic mechanism. Residue Q151 coordinates substrate. Residue E153 participates in Mg(2+) binding. Substrate-binding residues include A178 and D179. D179 contributes to the Mg(2+) binding site.

This sequence belongs to the HpcH/HpaI aldolase family. KDR aldolase subfamily. In terms of assembly, homohexamer. It depends on Mg(2+) as a cofactor.

It carries out the reaction 2-dehydro-3-deoxy-L-rhamnonate = (S)-lactaldehyde + pyruvate. Its function is as follows. Catalyzes the reversible retro-aldol cleavage of 2-keto-3-deoxy-L-rhamnonate (KDR) to pyruvate and lactaldehyde. The protein is 2-keto-3-deoxy-L-rhamnonate aldolase of Escherichia coli (strain UTI89 / UPEC).